A 240-amino-acid chain; its full sequence is Superoxide dismutase [Cu-Zn] (240 aa).

The N-terminal stretch at 1–32 is a signal peptide; that stretch reads MPKPADHRNHAAVSTSVLSALFLGAGAALLSA. Residue cysteine 33 is the site of N-palmitoyl cysteine attachment. A lipid anchor (S-diacylglycerol cysteine) is attached at cysteine 33. Composition is skewed to polar residues over residues 36 to 51 and 68 to 77; these read PQHA…SIWT and GAQSLTSTLT. Positions 36–77 are disordered; the sequence is PQHASTVPGTTPSIWTGSPAPSGLSGHDEESPGAQSLTSTLT. The Cu cation site is built by histidine 116 and histidine 118. Cysteine 123 and cysteine 234 are oxidised to a cystine. The Zn(2+) site is built by histidine 146 and aspartate 158. Residue histidine 195 coordinates Cu cation.

It belongs to the Cu-Zn superoxide dismutase family. Cu cation is required as a cofactor. Requires Zn(2+) as cofactor.

The protein resides in the cell membrane. It catalyses the reaction 2 superoxide + 2 H(+) = H2O2 + O2. Inhibited by the copper chelator diethyl dithiocarbamate. Destroys radicals which are normally produced within the cells and which are toxic to biological systems. May play a role in favoring mycobacterial survival in phagocytes. The polypeptide is Superoxide dismutase [Cu-Zn] (sodC) (Mycobacterium bovis (strain ATCC BAA-935 / AF2122/97)).